A 442-amino-acid chain; its full sequence is UDP-N-acetylmuramoylalanine--D-glutamate ligase (442 aa).

113-119 (GSNGKTT) is a binding site for ATP.

This sequence belongs to the MurCDEF family.

It localises to the cytoplasm. The catalysed reaction is UDP-N-acetyl-alpha-D-muramoyl-L-alanine + D-glutamate + ATP = UDP-N-acetyl-alpha-D-muramoyl-L-alanyl-D-glutamate + ADP + phosphate + H(+). It participates in cell wall biogenesis; peptidoglycan biosynthesis. In terms of biological role, cell wall formation. Catalyzes the addition of glutamate to the nucleotide precursor UDP-N-acetylmuramoyl-L-alanine (UMA). The polypeptide is UDP-N-acetylmuramoylalanine--D-glutamate ligase (Coxiella burnetii (strain CbuG_Q212) (Coxiella burnetii (strain Q212))).